The chain runs to 534 residues: 5,6-dihydroxyindole-2-carboxylic acid oxidase (534 aa).

A signal peptide spans 1–23 (MLGPATFLPLTAALLLLIPGGRA). The Lumenal, melanosome segment spans residues 24 to 477 (QFPRQCVTPE…WPSRALNFTE (454 aa)). Disulfide bonds link Cys-29–Cys-40, Cys-41–Cys-65, Cys-56–Cys-99, Cys-101–Cys-110, and Cys-113–Cys-122. Asn-96 and Asn-104 each carry an N-linked (GlcNAc...) asparagine glycan. Asn-175 and Asn-181 each carry an N-linked (GlcNAc...) asparagine glycan. Zn(2+) contacts are provided by His-192, His-215, and His-224. Disulfide bonds link Cys-258-Cys-261 and Cys-290-Cys-303. Residues Asn-304 and Asn-350 are each glycosylated (N-linked (GlcNAc...) asparagine). Residues His-377 and His-381 each contribute to the Zn(2+) site. N-linked (GlcNAc...) asparagine glycosylation is present at Asn-385. His-404 contacts Zn(2+). The helical transmembrane segment at 478 to 501 (IITIAVVAALVLVAVIFAAASCAV) threads the bilayer. The Cytoplasmic portion of the chain corresponds to 502 to 534 (HRSRKDDVHQPLLGEQYPRYSEEYERDASQSAV).

Belongs to the tyrosinase family. The cofactor is Cu(2+). Zn(2+) is required as a cofactor.

It localises to the melanosome membrane. The enzyme catalyses 2 5,6-dihydroxyindole-2-carboxylate + O2 = 2 indole-5,6-quinone-2-carboxylate + 2 H2O. The protein operates within pigment biosynthesis; melanin biosynthesis. Functionally, plays a role in melanin biosynthesis. Catalyzes the oxidation of 5,6-dihydroxyindole-2-carboxylic acid (DHICA) into indole-5,6-quinone-2-carboxylic acid. May regulate or influence the type of melanin synthesized. Also to a lower extent, capable of hydroxylating tyrosine and producing melanin. In Ambystoma mexicanum (Axolotl), this protein is 5,6-dihydroxyindole-2-carboxylic acid oxidase (TYRP1).